The chain runs to 344 residues: MTSGNGSSPVPTAATGNRTQNGENKPPQAVVKPQILTHFIEGFVIQEGAQPFPSHRSRAVLEVGHSSLLTGAQEKYQQSLLAEKVPQQDNNTTTTTTDSEMEETLVPGFPESKGDGDPPKLKCELCGRVDFEYKFKRSKRFCSMACAKRYNVGCTKRVGLFHPDRSKLQKPTVAKHARRRSRKTPLQTVGADPKKQQAAPVTPMNPGPIPSPSALKLSNSQEDSSRCSDNSSYEEPLSPMSASSSLSRARQEHNVEPPNLHSRDPIAMSQDFLPSDPTKWNVEDVYDFVRSLPGCQEISEEFRAQEIDGQALLLLKEDHLMSAMNIKLGPALKLYARISMLKDS.

The segment covering 1 to 23 (MTSGNGSSPVPTAATGNRTQNGE) has biased composition (polar residues). Residues 1 to 28 (MTSGNGSSPVPTAATGNRTQNGENKPPQ) are disordered. The HD1 motif lies at 25-53 (KPPQAVVKPQILTHFIEGFVIQEGAQPFP). The FCS-type zinc-finger motif lies at 114–148 (GDGDPPKLKCELCGRVDFEYKFKRSKRFCSMACAK). Cys-123, Cys-126, Cys-142, and Cys-146 together coordinate Zn(2+). Residues 165–269 (RSKLQKPTVA…LHSRDPIAMS (105 aa)) are disordered. The span at 173–183 (VAKHARRRSRK) shows a compositional bias: basic residues. The span at 216-233 (KLSNSQEDSSRCSDNSSY) shows a compositional bias: polar residues. Over residues 234-248 (EEPLSPMSASSSLSR) the composition is skewed to low complexity. An SAM domain is found at 280-344 (WNVEDVYDFV…YARISMLKDS (65 aa)).

Component of a PRC1-like complex.

The protein localises to the nucleus. Its function is as follows. Component of a Polycomb group (PcG) multiprotein PRC1-like complex, a complex class required to maintain the transcriptionally repressive state of many genes, including Hox genes, throughout development. PcG PRC1 complex acts via chromatin remodeling and modification of histones; it mediates monoubiquitination of histone H2A 'Lys-119', rendering chromatin heritably changed in its expressibility. This Xenopus laevis (African clawed frog) protein is Polyhomeotic-like protein 2 (phc2).